The primary structure comprises 366 residues: Phospho-2-dehydro-3-deoxyheptonate aldolase (366 aa).

It belongs to the class-I DAHP synthase family.

The enzyme catalyses D-erythrose 4-phosphate + phosphoenolpyruvate + H2O = 7-phospho-2-dehydro-3-deoxy-D-arabino-heptonate + phosphate. Its pathway is metabolic intermediate biosynthesis; chorismate biosynthesis; chorismate from D-erythrose 4-phosphate and phosphoenolpyruvate: step 1/7. Stereospecific condensation of phosphoenolpyruvate (PEP) and D-erythrose-4-phosphate (E4P) giving rise to 3-deoxy-D-arabino-heptulosonate-7-phosphate (DAHP). This is Phospho-2-dehydro-3-deoxyheptonate aldolase (aroG) from Corynebacterium glutamicum (strain ATCC 13032 / DSM 20300 / JCM 1318 / BCRC 11384 / CCUG 27702 / LMG 3730 / NBRC 12168 / NCIMB 10025 / NRRL B-2784 / 534).